We begin with the raw amino-acid sequence, 702 residues long: Elongation factor G 2 (702 aa).

In terms of domain architecture, tr-type G spans 8-290 (ERYRNIGISA…AVIDYLPSPV (283 aa)). Residues 17-24 (AHIDAGKT), 88-92 (DTPGH), and 142-145 (NKMD) contribute to the GTP site.

It belongs to the TRAFAC class translation factor GTPase superfamily. Classic translation factor GTPase family. EF-G/EF-2 subfamily.

It is found in the cytoplasm. Catalyzes the GTP-dependent ribosomal translocation step during translation elongation. During this step, the ribosome changes from the pre-translocational (PRE) to the post-translocational (POST) state as the newly formed A-site-bound peptidyl-tRNA and P-site-bound deacylated tRNA move to the P and E sites, respectively. Catalyzes the coordinated movement of the two tRNA molecules, the mRNA and conformational changes in the ribosome. This chain is Elongation factor G 2, found in Cupriavidus metallidurans (strain ATCC 43123 / DSM 2839 / NBRC 102507 / CH34) (Ralstonia metallidurans).